Reading from the N-terminus, the 85-residue chain is UPF0335 protein Plav_2034 (85 aa).

This sequence belongs to the UPF0335 family.

This is UPF0335 protein Plav_2034 from Parvibaculum lavamentivorans (strain DS-1 / DSM 13023 / NCIMB 13966).